Here is an 87-residue protein sequence, read N- to C-terminus: Small ribosomal subunit protein bS20 (87 aa).

Over residues 1 to 11 (MANIKSAKKRA) the composition is skewed to basic residues. The disordered stretch occupies residues 1–26 (MANIKSAKKRAVQSEKRRQHNASQRS).

This sequence belongs to the bacterial ribosomal protein bS20 family.

In terms of biological role, binds directly to 16S ribosomal RNA. This Actinobacillus pleuropneumoniae serotype 5b (strain L20) protein is Small ribosomal subunit protein bS20.